The primary structure comprises 429 residues: Ribosomal RNA small subunit methyltransferase B (429 aa).

S-adenosyl-L-methionine contacts are provided by residues 254 to 260 (CAAPGGK), aspartate 277, aspartate 303, and aspartate 322. Catalysis depends on cysteine 375, which acts as the Nucleophile.

This sequence belongs to the class I-like SAM-binding methyltransferase superfamily. RsmB/NOP family.

It localises to the cytoplasm. The enzyme catalyses cytidine(967) in 16S rRNA + S-adenosyl-L-methionine = 5-methylcytidine(967) in 16S rRNA + S-adenosyl-L-homocysteine + H(+). Functionally, specifically methylates the cytosine at position 967 (m5C967) of 16S rRNA. This chain is Ribosomal RNA small subunit methyltransferase B, found in Shigella flexneri serotype 5b (strain 8401).